Reading from the N-terminus, the 1388-residue chain is Rho-associated protein kinase 2 (1388 aa).

Residues 1–26 form a disordered region; that stretch reads MSRPPPTGKMPGAPEAAPGDGAGAGR. Positions 92–354 constitute a Protein kinase domain; that stretch reads YDVVKVIGRG…VEEIKQHPFF (263 aa). Residues 98-106 and K121 each bind ATP; that span reads IGRGAFGEV. Residue D214 is the Proton acceptor of the active site. Positions 357-425 constitute an AGC-kinase C-terminal domain; the sequence is DQWNWDNIRE…FRENLLLSDS (69 aa). Residues 363 to 784 form an interaction with PPP1R12A region; the sequence is NIRETAAPVV…LNELLKQKDV (422 aa). The interval 373 to 420 is interaction with NPM1; sequence PELSSDIDSSNFDDIEDDKGDVETFPIPKAFVGNQLPFIGFTYFRENL. T414 is subject to Phosphothreonine; by ROCK2. Residues 439 to 1131 are a coiled coil; the sequence is SEESQEIQKK…QLQALHIGMD (693 aa). The REM-1 domain occupies 497–573; that stretch reads TLRQLEREKA…LDEANALLRT (77 aa). A compositionally biased stretch (basic and acidic residues) spans 512–530; the sequence is NAEYQRKADHEADKKRNLE. Positions 512 to 532 are disordered; sequence NAEYQRKADHEADKKRNLEND. A Phosphotyrosine; by SRC modification is found at Y722. A RhoBD domain is found at 979–1047; that stretch reads TSDVANLANE…LAEIMNRKEP (69 aa). Residues 979–1047 form an RHOA binding region; that stretch reads TSDVANLANE…LAEIMNRKEP (69 aa). S1137 bears the Phosphoserine mark. One can recognise a PH domain in the interval 1150–1349; the sequence is ESRLEGWLSL…WVSRLVKKIP (200 aa). At T1212 the chain carries Phosphothreonine. A Phorbol-ester/DAG-type zinc finger spans residues 1260–1315; it reads GHEFIPTLYHFPTNCEACMKPLWHMFKPPPALECRRCHIKCHKDHMDKKEEIIAPC. Residues 1345–1388 form a disordered region; the sequence is VKKIPKKPPAPDPFARSSPRTSMKIQQNQSIRRPSRQLAPNKPS. 2 positions are modified to phosphoserine: S1362 and S1374. Residues 1362 to 1376 show a composition bias toward polar residues; it reads SPRTSMKIQQNQSIR.

Belongs to the protein kinase superfamily. AGC Ser/Thr protein kinase family. In terms of assembly, homodimer. Interacts with IRS1. Interacts with RAF1. Interacts with RHOA (activated by GTP), RHOB and RHOC. Interacts with PPP1R12A. Interacts with EP300. Interacts with CHORDC1. Interacts with BRCA2. Interacts with NPM1; this interaction enhances ROCK2 activity. Interacts with SORL1. Interacts with PJVK. Mg(2+) serves as cofactor. Autophosphorylated. Phosphorylation at Tyr-722 reduces its binding to RHOA and is crucial for focal adhesion dynamics. Dephosphorylation by PTPN11 stimulates its RHOA binding activity. Post-translationally, cleaved by granzyme B during apoptosis. This leads to constitutive activation of the kinase and membrane blebbing. In terms of tissue distribution, highly expressed in brain, heart, lung, liver, stomach, spleen, kidney, testis, muscle, embryo and placenta. Isoform 2 is expressed predominantly in the skeletal muscle.

It localises to the cytoplasm. The protein localises to the cell membrane. It is found in the nucleus. Its subcellular location is the cytoskeleton. The protein resides in the microtubule organizing center. It localises to the centrosome. It carries out the reaction L-seryl-[protein] + ATP = O-phospho-L-seryl-[protein] + ADP + H(+). The enzyme catalyses L-threonyl-[protein] + ATP = O-phospho-L-threonyl-[protein] + ADP + H(+). Its activity is regulated as follows. Activated by RHOA binding. Inhibited by Y-27632. Protein kinase which is a key regulator of actin cytoskeleton and cell polarity. Involved in regulation of smooth muscle contraction, actin cytoskeleton organization, stress fiber and focal adhesion formation, neurite retraction, cell adhesion and motility via phosphorylation of ADD1, BRCA2, CNN1, EZR, DPYSL2, EP300, MSN, MYL9/MLC2, NPM1, RDX, PPP1R12A and VIM. Phosphorylates SORL1 and IRF4. Acts as a negative regulator of VEGF-induced angiogenic endothelial cell activation. Positively regulates the activation of p42/MAPK1-p44/MAPK3 and of p90RSK/RPS6KA1 during myogenic differentiation. Plays an important role in the timely initiation of centrosome duplication. Inhibits keratinocyte terminal differentiation. May regulate closure of the eyelids and ventral body wall through organization of actomyosin bundles. Plays a critical role in the regulation of spine and synaptic properties in the hippocampus. Plays a role in placental homeostasis during the perinatal period. Plays an important role in generating the circadian rhythm of the aortic myofilament Ca(2+) sensitivity and vascular contractility by modulating the myosin light chain phosphorylation. The chain is Rho-associated protein kinase 2 (Rock2) from Mus musculus (Mouse).